Here is a 208-residue protein sequence, read N- to C-terminus: Ras-related protein Rab-6A (208 aa).

An N-acetylserine modification is found at Ser2. Positions 23, 24, 25, 26, 27, 28, 39, 40, 42, and 45 each coordinate GTP. Thr27 lines the Mg(2+) pocket. The Switch 1 motif lies at 32 to 50 (RFMYDSFDNTYQATIGIDF). Thr45 and Asp68 together coordinate Mg(2+). A Switch 2 motif is present at residues 69–88 (TAGQERFRSLIPSYIRDSTV). Gly71 is a GTP binding site. Tyr82 carries the O-AMP-tyrosine; by Legionella DrrA modification. Positions 126, 127, 129, 156, 157, and 158 each coordinate GTP. A Phosphoserine modification is found at Ser184. S-geranylgeranyl cysteine attachment occurs at residues Cys206 and Cys208. Cys208 carries the cysteine methyl ester modification.

The protein belongs to the small GTPase superfamily. Rab family. As to quaternary structure, interacts (GTP-bound) with DYNLRB1; the interaction is direct. Interacts with BICD1. Interacts with BICD2; the interaction is direct. Interacts (GTP-bound) with VPS13B. In terms of assembly, interacts with BICD1. Interacts (GDP-bound) with DYNLRB1; the interaction is direct. Interacts (GTP-bound) with VPS13B. Interacts with BICDL1; leads to its accumulation in the pericentrosomal region. Interacts with SCYL1BP1. Interacts with VSP52. Interacts with RABGAP1. Interacts with GCC2 (via its GRIP domain). Interacts with RAB6IP1 (via its RUN 1 domain). Interacts with TMF1. Interacts with CIMAP3. Interacts (GTP-bound) with APBA1/MINT1 isoform 2, also called Mint1_826, but not with isoform 1. Interacts with RIC1; the interaction is direct with a preference for RAB6A-GDP. Interacts with RGP1; the interaction is direct with a preference for RAB6A-GDP. As to quaternary structure, (Microbial infection) Interacts with human cytomegalovirus protein UL32. The cofactor is Mg(2+). Post-translationally, prenylated. In terms of tissue distribution, ubiquitous.

The protein localises to the golgi apparatus membrane. It is found in the cytoplasmic vesicle. The protein resides in the secretory vesicle. It localises to the acrosome membrane. The catalysed reaction is GTP + H2O = GDP + phosphate + H(+). With respect to regulation, regulated by guanine nucleotide exchange factors (GEFs) which promote the exchange of bound GDP for free GTP. Regulated by GTPase activating proteins (GAPs) which increase the GTP hydrolysis activity. Inhibited by GDP dissociation inhibitors (GDIs). In terms of biological role, the small GTPases Rab are key regulators of intracellular membrane trafficking, from the formation of transport vesicles to their fusion with membranes. Rabs cycle between an inactive GDP-bound form and an active GTP-bound form that is able to recruit to membranes different sets of downstream effectors directly responsible for vesicle formation, movement, tethering and fusion. RAB6A acts as a regulator of COPI-independent retrograde transport from the Golgi apparatus towards the endoplasmic reticulum (ER). Has a low GTPase activity. Recruits VPS13B to the Golgi membrane. Plays a role in neuron projection development. In Homo sapiens (Human), this protein is Ras-related protein Rab-6A.